The primary structure comprises 380 residues: Cytochrome b (380 aa).

Helical transmembrane passes span 34–54 (SGSL…FLAM), 78–99 (WFLR…YCHI), 114–134 (WNVG…GYVL), and 179–199 (FFPF…IHLV). 2 residues coordinate heme b: His-84 and His-98. Residues His-183 and His-197 each coordinate heme b. His-202 contributes to the a ubiquinone binding site. 4 consecutive transmembrane segments (helical) span residues 227-247 (TKDT…ALLF), 289-309 (LGGV…PLLN), 321-341 (LSQA…WIGS), and 348-369 (YVLL…GFPI).

The protein belongs to the cytochrome b family. As to quaternary structure, the main subunits of complex b-c1 are: cytochrome b, cytochrome c1 and the Rieske protein. It depends on heme b as a cofactor.

It localises to the mitochondrion inner membrane. Functionally, component of the ubiquinol-cytochrome c reductase complex (complex III or cytochrome b-c1 complex) that is part of the mitochondrial respiratory chain. The b-c1 complex mediates electron transfer from ubiquinol to cytochrome c. Contributes to the generation of a proton gradient across the mitochondrial membrane that is then used for ATP synthesis. This chain is Cytochrome b (MT-CYB), found in Strongylocentrotus purpuratus (Purple sea urchin).